Consider the following 512-residue polypeptide: 2-isopropylmalate synthase (512 aa).

The region spanning 4–266 (IQFFDTTLRD…ETNIVLNQFK (263 aa)) is the Pyruvate carboxyltransferase domain. Residues Asp13, His201, His203, and Asn237 each contribute to the Mn(2+) site. The interval 390 to 512 (ELKHLQVQYV…TKQVDFEEVK (123 aa)) is regulatory domain.

Belongs to the alpha-IPM synthase/homocitrate synthase family. LeuA type 1 subfamily. As to quaternary structure, homodimer. Mn(2+) is required as a cofactor.

The protein resides in the cytoplasm. It carries out the reaction 3-methyl-2-oxobutanoate + acetyl-CoA + H2O = (2S)-2-isopropylmalate + CoA + H(+). It functions in the pathway amino-acid biosynthesis; L-leucine biosynthesis; L-leucine from 3-methyl-2-oxobutanoate: step 1/4. Functionally, catalyzes the condensation of the acetyl group of acetyl-CoA with 3-methyl-2-oxobutanoate (2-ketoisovalerate) to form 3-carboxy-3-hydroxy-4-methylpentanoate (2-isopropylmalate). The protein is 2-isopropylmalate synthase of Listeria welshimeri serovar 6b (strain ATCC 35897 / DSM 20650 / CCUG 15529 / CIP 8149 / NCTC 11857 / SLCC 5334 / V8).